We begin with the raw amino-acid sequence, 90 residues long: Elongation factor 1-beta (90 aa).

Belongs to the EF-1-beta/EF-1-delta family.

Promotes the exchange of GDP for GTP in EF-1-alpha/GDP, thus allowing the regeneration of EF-1-alpha/GTP that could then be used to form the ternary complex EF-1-alpha/GTP/AAtRNA. This chain is Elongation factor 1-beta, found in Sulfolobus acidocaldarius (strain ATCC 33909 / DSM 639 / JCM 8929 / NBRC 15157 / NCIMB 11770).